We begin with the raw amino-acid sequence, 669 residues long: RNA-binding protein 14 (669 aa).

2 consecutive RRM domains span residues methionine 1–proline 73 and tryptophan 79–lysine 149. Glycyl lysine isopeptide (Lys-Gly) (interchain with G-Cter in SUMO2) cross-links involve residues lysine 126, lysine 135, lysine 138, lysine 149, and lysine 153. Disordered regions lie at residues serine 147–phenylalanine 175 and asparagine 193–alanine 232. Serine 161 bears the Phosphoserine mark. Lysine 164 is subject to N6-acetyllysine; alternate. Lysine 164 participates in a covalent cross-link: Glycyl lysine isopeptide (Lys-Gly) (interchain with G-Cter in SUMO2); alternate. At threonine 206 the chain carries Phosphothreonine. Serine 220, serine 242, serine 244, serine 256, serine 272, and serine 280 each carry phosphoserine. The tract at residues proline 284 to glycine 303 is disordered. Residues glycine 287–glycine 303 are compositionally biased toward low complexity. The segment at glycine 307–serine 354 is TRBP-interacting domain; interaction with STIL. 4 positions are modified to phosphoserine: serine 520, serine 523, serine 527, and serine 562. The interval valine 566 to tyrosine 592 is disordered. At threonine 572 the chain carries Phosphothreonine. Serine 582 is subject to Phosphoserine. Lysine 600 participates in a covalent cross-link: Glycyl lysine isopeptide (Lys-Gly) (interchain with G-Cter in SUMO2). Phosphoserine is present on residues serine 618, serine 620, serine 623, serine 627, serine 643, and serine 649.

As to quaternary structure, interacts with NCOA6, CITED1 and XRCC5/KU86. Interacts with SS18. Interacts with STIL and interferes with its interaction with CPAP. Interacts with gamma-tubulin. Part of the HDP-RNP complex composed of at least HEXIM1, PRKDC, XRCC5, XRCC6, paraspeckle proteins (SFPQ, NONO, PSPC1, RBM14, and MATR3) and NEAT1 RNA.

The protein resides in the nucleus. Its subcellular location is the nucleolus. It localises to the cytoplasm. Functionally, may function as a nuclear receptor coactivator, enhancing transcription through other coactivators such as NCOA6 and CITED1. Regulates centriole biogenesis by suppressing the formation of aberrant centriolar protein complexes in the cytoplasm and thus preserving mitotic spindle integrity. Prevents the formation of the STIL-CPAP complex (which can induce the formation of aberrant centriolar protein complexes) by interfering with the interaction of STIL with CPAP. Plays a role in the regulation of DNA virus-mediated innate immune response by assembling into the HDP-RNP complex, a complex that serves as a platform for IRF3 phosphorylation and subsequent innate immune response activation through the cGAS-STING pathway. The chain is RNA-binding protein 14 (RBM14) from Pongo abelii (Sumatran orangutan).